The sequence spans 475 residues: Ribulose bisphosphate carboxylase large chain (475 aa).

The propeptide occupies 1-2; sequence MS. Pro-3 carries the post-translational modification N-acetylproline. Lys-14 carries the post-translational modification N6,N6,N6-trimethyllysine. Residues Asn-123 and Thr-173 each contribute to the substrate site. The active-site Proton acceptor is Lys-175. A substrate-binding site is contributed by Lys-177. Residues Lys-201, Asp-203, and Glu-204 each coordinate Mg(2+). The residue at position 201 (Lys-201) is an N6-carboxylysine. His-294 functions as the Proton acceptor in the catalytic mechanism. Substrate is bound by residues Arg-295, His-327, and Ser-379.

It belongs to the RuBisCO large chain family. Type I subfamily. As to quaternary structure, heterohexadecamer of 8 large chains and 8 small chains; disulfide-linked. The disulfide link is formed within the large subunit homodimers. Requires Mg(2+) as cofactor. The disulfide bond which can form in the large chain dimeric partners within the hexadecamer appears to be associated with oxidative stress and protein turnover.

The protein localises to the plastid. The protein resides in the chloroplast. The enzyme catalyses 2 (2R)-3-phosphoglycerate + 2 H(+) = D-ribulose 1,5-bisphosphate + CO2 + H2O. The catalysed reaction is D-ribulose 1,5-bisphosphate + O2 = 2-phosphoglycolate + (2R)-3-phosphoglycerate + 2 H(+). RuBisCO catalyzes two reactions: the carboxylation of D-ribulose 1,5-bisphosphate, the primary event in carbon dioxide fixation, as well as the oxidative fragmentation of the pentose substrate in the photorespiration process. Both reactions occur simultaneously and in competition at the same active site. This is Ribulose bisphosphate carboxylase large chain from Carica papaya (Papaya).